Reading from the N-terminus, the 395-residue chain is Crh-like protein 5 (395 aa).

Positions 1-19 (MYFKYTAAALAAVLPLCSA) are cleaved as a signal peptide. The cysteines at positions 25 and 32 are disulfide-linked. The 186-residue stretch at 45–230 (ADFTSASALD…WAGGLTDYSA (186 aa)) folds into the GH16 domain. The active-site Nucleophile is E119. E123 (proton donor) is an active-site residue. 4 residues coordinate chitin: E123, R203, W207, and T218. The segment at 271–374 (ISSSSSVTSS…PELSQGAAGS (104 aa)) is disordered. Composition is skewed to low complexity over residues 272-338 (SSSS…SNTG) and 348-364 (GSSS…ASAT). N319 is a glycosylation site (N-linked (GlcNAc...) asparagine). G370 carries the GPI-like-anchor amidated glycine lipid modification. Positions 371 to 395 (AAGSIKGSVTACALVFGAVAAVLAF) are cleaved as a propeptide — removed in mature form.

The protein belongs to the glycosyl hydrolase 16 family. CRH1 subfamily. In terms of processing, the GPI-like anchor contains a phosphoceramide lipid group. The anchor position has not been determined.

It localises to the cell membrane. The protein localises to the secreted. The protein resides in the cell wall. It catalyses the reaction Random endo-hydrolysis of N-acetyl-beta-D-glucosaminide (1-&gt;4)-beta-linkages in chitin and chitodextrins.. In terms of biological role, dual chitinase/transglycosylase that plays a role in cell wall architecture. Chitinase and transglycosylase activities are coupled. Required for the polysaccharide cross-linking at the septa and the cell wall. More specifically, transfers chitin to 1,6-beta-glucan in the cell wall. Chr5 shows acceptor substrate promiscuity and is also able to cross-link chitin to chitin. This chain is Crh-like protein 5, found in Aspergillus fumigatus (strain ATCC MYA-4609 / CBS 101355 / FGSC A1100 / Af293) (Neosartorya fumigata).